The sequence spans 29 residues: Lambda-theraphotoxin-Ec2b (29 aa).

3 disulfides stabilise this stretch: C2–C16, C9–C21, and C15–C25.

It belongs to the neurotoxin 30 (phrixotoxin) family. As to expression, expressed by the venom gland.

Its subcellular location is the secreted. Insect-selective neurotoxin that potently blocks insect calcium-activated potassium (BKCa) channels (Slo-type) in cockroach dorsal unpaired median (DUM) neurons (IC(50)=25.3 nM). This occurs in the absence of any shifts in the voltage dependence of activation. May interact with the turret and/or loop region of the external entrance to the channel and does not project deeply into the pore of the channel. In vivo, does not show toxicity in mice after intracerebroventricular injection of up to 25 pmol/g (1.8 ug/20 g mouse). The protein is Lambda-theraphotoxin-Ec2b of Eucratoscelus constrictus (African red-rump baboon spider).